The following is a 401-amino-acid chain: MKKDYYEVLGVSRSASKDEIKKAYRKLALQYHPDKNPDNKDAEEHFKEVNEAYEVLSNDDKRRRYDQFGHAGVGSSAASGAGGAYAGGATDFNDIFSAFNDMFGGGRARGGGAPFGFEEVFGGGGGAGRRGRTSAGISGTDLKIRLKLTLEEIAKGVEKTLKIKKQIVCKECNGSGSKTGATEPCQTCHGSGEVRQASKTMFGQFVNITACPTCGGEGRVVKDRCTACYGEGIKQGDVTVKVTVPAGVQDGNYLTLRGQGNAGPRGGAPGDLIVVIEEKPHELFRRDGNDVIFNLALSYPDLVLGTKIDVPTLDGAVKLTIPPATQPESMLRIPGQGIGHLRGSGKGDQLVRVNVYVPKDLSHHEKELLKELKKTAAFSPSGSNNDKEEKSFFEKARDIFS.

In terms of domain architecture, J spans 4 to 69; the sequence is DYYEVLGVSR…DKRRRYDQFG (66 aa). The CR-type zinc finger occupies 156-237; it reads GVEKTLKIKK…CYGEGIKQGD (82 aa). Zn(2+)-binding residues include C169, C172, C185, C188, C211, C214, C225, and C228. CXXCXGXG motif repeat units follow at residues 169–176, 185–192, 211–218, and 225–232; these read CKECNGSG, CQTCHGSG, CPTCGGEG, and CTACYGEG. Residues 377–401 are disordered; the sequence is AFSPSGSNNDKEEKSFFEKARDIFS. Residues 385 to 401 are compositionally biased toward basic and acidic residues; that stretch reads NDKEEKSFFEKARDIFS.

This sequence belongs to the DnaJ family. In terms of assembly, homodimer. Requires Zn(2+) as cofactor.

It localises to the cytoplasm. Functionally, participates actively in the response to hyperosmotic and heat shock by preventing the aggregation of stress-denatured proteins and by disaggregating proteins, also in an autonomous, DnaK-independent fashion. Unfolded proteins bind initially to DnaJ; upon interaction with the DnaJ-bound protein, DnaK hydrolyzes its bound ATP, resulting in the formation of a stable complex. GrpE releases ADP from DnaK; ATP binding to DnaK triggers the release of the substrate protein, thus completing the reaction cycle. Several rounds of ATP-dependent interactions between DnaJ, DnaK and GrpE are required for fully efficient folding. Also involved, together with DnaK and GrpE, in the DNA replication of plasmids through activation of initiation proteins. The polypeptide is Chaperone protein DnaJ (Chlorobium limicola (strain DSM 245 / NBRC 103803 / 6330)).